A 579-amino-acid polypeptide reads, in one-letter code: A-type ATP synthase subunit A (579 aa).

Residue 229–236 (GPFGSGKT) coordinates ATP.

This sequence belongs to the ATPase alpha/beta chains family. As to quaternary structure, has multiple subunits with at least A(3), B(3), C, D, E, F, H, I and proteolipid K(x).

The protein localises to the cell membrane. It catalyses the reaction ATP + H2O + 4 H(+)(in) = ADP + phosphate + 5 H(+)(out). In terms of biological role, component of the A-type ATP synthase that produces ATP from ADP in the presence of a proton gradient across the membrane. The A chain is the catalytic subunit. The protein is A-type ATP synthase subunit A of Methanocella arvoryzae (strain DSM 22066 / NBRC 105507 / MRE50).